We begin with the raw amino-acid sequence, 209 residues long: Large ribosomal subunit protein uL3 (209 aa).

Residues 133–153 (THGNSLSHRVPGSIGQNQTPG) are disordered. Gln-150 bears the N5-methylglutamine mark.

This sequence belongs to the universal ribosomal protein uL3 family. Part of the 50S ribosomal subunit. Forms a cluster with proteins L14 and L19. Post-translationally, methylated by PrmB.

In terms of biological role, one of the primary rRNA binding proteins, it binds directly near the 3'-end of the 23S rRNA, where it nucleates assembly of the 50S subunit. The sequence is that of Large ribosomal subunit protein uL3 from Pectobacterium carotovorum subsp. carotovorum (strain PC1).